A 115-amino-acid chain; its full sequence is Large ribosomal subunit protein bL19 (115 aa).

It belongs to the bacterial ribosomal protein bL19 family.

This protein is located at the 30S-50S ribosomal subunit interface and may play a role in the structure and function of the aminoacyl-tRNA binding site. In Caldanaerobacter subterraneus subsp. tengcongensis (strain DSM 15242 / JCM 11007 / NBRC 100824 / MB4) (Thermoanaerobacter tengcongensis), this protein is Large ribosomal subunit protein bL19.